The following is a 120-amino-acid chain: MGCCGCGGCGGCGGRCGGCGGGCGGGCGGGCGGGCGGGCGGGCGGGCGGGCGGSCGSCTTCRCYRVGCCSSCCPCCRGCCGGCCSTPVICCCRRTCHSCGCGCGKGCCQQKCCCQKQCCC.

The tract at residues 4–104 is 19 X 2 AA repeats of CG; it reads CGCGGCGGCG…TCHSCGCGCG (101 aa).

This sequence belongs to the KRTAP type 28 family.

Its function is as follows. In the hair cortex, hair keratin intermediate filaments are embedded in an interfilamentous matrix, consisting of hair keratin-associated proteins (KRTAP), which are essential for the formation of a rigid and resistant hair shaft through their extensive disulfide bond cross-linking with abundant cysteine residues of hair keratins. The matrix proteins include the high-sulfur and high-glycine-tyrosine keratins. The polypeptide is Small cysteine and glycine repeat-containing protein 2 (Homo sapiens (Human)).